We begin with the raw amino-acid sequence, 251 residues long: MLAKRIIPCLDVTGGRVVKGINFEGLRDAGSILEQARFYNGELADELVFLDISASVESRKTTLEEVLKVSGEVFIPLTVGGGINSVDRAREIFMHGADKVSVNTAVVKEPELISRIAEKYGSQAVVVAIDVKKKDDRYMVHTHSGKIPTPLEAVEWAQMVQELGAGEILLTSMDRDGTQEGYDNDILAKVSTSVHIPVIASGGAGNLEHLYDGFTRGKADAALAASIFHFRQYSIRQAKQYLRDRGIPVRL.

Catalysis depends on residues D11 and D130.

This sequence belongs to the HisA/HisF family. As to quaternary structure, heterodimer of HisH and HisF.

The protein resides in the cytoplasm. The enzyme catalyses 5-[(5-phospho-1-deoxy-D-ribulos-1-ylimino)methylamino]-1-(5-phospho-beta-D-ribosyl)imidazole-4-carboxamide + L-glutamine = D-erythro-1-(imidazol-4-yl)glycerol 3-phosphate + 5-amino-1-(5-phospho-beta-D-ribosyl)imidazole-4-carboxamide + L-glutamate + H(+). The protein operates within amino-acid biosynthesis; L-histidine biosynthesis; L-histidine from 5-phospho-alpha-D-ribose 1-diphosphate: step 5/9. In terms of biological role, IGPS catalyzes the conversion of PRFAR and glutamine to IGP, AICAR and glutamate. The HisF subunit catalyzes the cyclization activity that produces IGP and AICAR from PRFAR using the ammonia provided by the HisH subunit. This Chlorobium limicola (strain DSM 245 / NBRC 103803 / 6330) protein is Imidazole glycerol phosphate synthase subunit HisF.